The primary structure comprises 393 residues: Phosphoglycerate kinase (393 aa).

Residues 21–23, Arg37, 60–63, Arg119, and Arg152 contribute to the substrate site; these read DFN and HLGR. Residues Lys202, Gly291, Glu322, and 348–351 each bind ATP; that span reads GGDT.

It belongs to the phosphoglycerate kinase family. In terms of assembly, monomer.

It is found in the cytoplasm. The enzyme catalyses (2R)-3-phosphoglycerate + ATP = (2R)-3-phospho-glyceroyl phosphate + ADP. The protein operates within carbohydrate degradation; glycolysis; pyruvate from D-glyceraldehyde 3-phosphate: step 2/5. The sequence is that of Phosphoglycerate kinase from Coprothermobacter proteolyticus (strain ATCC 35245 / DSM 5265 / OCM 4 / BT).